We begin with the raw amino-acid sequence, 328 residues long: UDP-glucose 4-epimerase (328 aa).

Residues 20-21 (FV), 41-46 (VRHAVN), 57-58 (DI), 77-81 (CAARA), Ser-123, Tyr-149, and Lys-153 each bind NAD(+). Substrate contacts are provided by Ser-123 and Tyr-149. Residue Tyr-149 is the Proton acceptor of the active site. Substrate contacts are provided by residues 198–199 (GI) and 215–217 (SIN).

It belongs to the NAD(P)-dependent epimerase/dehydratase family. In terms of assembly, homodimer. The cofactor is NAD(+).

It carries out the reaction UDP-alpha-D-glucose = UDP-alpha-D-galactose. It participates in bacterial outer membrane biogenesis; LPS O-antigen biosynthesis. In terms of biological role, involved in the metabolism of galactose. Catalyzes the conversion of UDP-galactose (UDP-Gal) to UDP-glucose (UDP-Glc) through a mechanism involving the transient reduction of NAD. This chain is UDP-glucose 4-epimerase (galE), found in Vibrio cholerae.